Consider the following 250-residue polypeptide: NAD-dependent protein deacylase (250 aa).

Positions 1–248 (MLGEVSKILA…PKLVEEIRRI (248 aa)) constitute a Deacetylase sirtuin-type domain. 20–39 (GAGISAESGIPTFRGKDGLW) lines the NAD(+) pocket. Substrate contacts are provided by Tyr64 and Arg67. Residue 98–101 (QNVD) participates in NAD(+) binding. His116 functions as the Proton acceptor in the catalytic mechanism. 4 residues coordinate Zn(2+): Cys124, Cys127, Cys150, and Cys153. Residues 190–192 (GTS), 216–218 (NIE), and Ala234 contribute to the NAD(+) site.

Belongs to the sirtuin family. Class III subfamily. The cofactor is Zn(2+).

The protein localises to the cytoplasm. The catalysed reaction is N(6)-acetyl-L-lysyl-[protein] + NAD(+) + H2O = 2''-O-acetyl-ADP-D-ribose + nicotinamide + L-lysyl-[protein]. The enzyme catalyses N(6)-succinyl-L-lysyl-[protein] + NAD(+) + H2O = 2''-O-succinyl-ADP-D-ribose + nicotinamide + L-lysyl-[protein]. NAD-dependent lysine deacetylase and desuccinylase that specifically removes acetyl and succinyl groups on target proteins. Modulates the activities of several proteins which are inactive in their acylated form. Deacetylates the N-terminal lysine residue of Alba, the major archaeal chromatin protein and that, in turn, increases Alba's DNA binding affinity, thereby repressing transcription. The chain is NAD-dependent protein deacylase from Pyrococcus furiosus (strain ATCC 43587 / DSM 3638 / JCM 8422 / Vc1).